The sequence spans 209 residues: Probable GTP-binding protein EngB (209 aa).

Residues 12-203 enclose the EngB-type G domain; that stretch reads VSFEIIFVGR…RDRLHEMKRD (192 aa). GTP is bound by residues 20-27, 45-49, 62-65, 142-145, and 179-181; these read GRSNVGKS, GVTLR, DMPG, NKMD, and ISA. Residues S27 and T47 each coordinate Mg(2+).

The protein belongs to the TRAFAC class TrmE-Era-EngA-EngB-Septin-like GTPase superfamily. EngB GTPase family. The cofactor is Mg(2+).

Functionally, necessary for normal cell division and for the maintenance of normal septation. The polypeptide is Probable GTP-binding protein EngB (Methanosarcina barkeri (strain Fusaro / DSM 804)).